Consider the following 360-residue polypeptide: DNA replication and repair protein RecF (360 aa).

33-40 (GENGSGKT) contributes to the ATP binding site.

This sequence belongs to the RecF family.

Its subcellular location is the cytoplasm. Its function is as follows. The RecF protein is involved in DNA metabolism; it is required for DNA replication and normal SOS inducibility. RecF binds preferentially to single-stranded, linear DNA. It also seems to bind ATP. This chain is DNA replication and repair protein RecF, found in Rickettsia africae (strain ESF-5).